Here is a 139-residue protein sequence, read N- to C-terminus: Large-conductance mechanosensitive channel (139 aa).

Helical transmembrane passes span 14 to 34, 38 to 58, and 82 to 102; these read VVDL…VNSA, IFMP…YYIP, and GQFL…FLVI.

This sequence belongs to the MscL family. As to quaternary structure, homopentamer.

The protein resides in the cell inner membrane. In terms of biological role, channel that opens in response to stretch forces in the membrane lipid bilayer. May participate in the regulation of osmotic pressure changes within the cell. The chain is Large-conductance mechanosensitive channel from Methylobacterium radiotolerans (strain ATCC 27329 / DSM 1819 / JCM 2831 / NBRC 15690 / NCIMB 10815 / 0-1).